Here is a 341-residue protein sequence, read N- to C-terminus: S-adenosylmethionine:tRNA ribosyltransferase-isomerase (341 aa).

The protein belongs to the QueA family. In terms of assembly, monomer.

Its subcellular location is the cytoplasm. The catalysed reaction is 7-aminomethyl-7-carbaguanosine(34) in tRNA + S-adenosyl-L-methionine = epoxyqueuosine(34) in tRNA + adenine + L-methionine + 2 H(+). It participates in tRNA modification; tRNA-queuosine biosynthesis. In terms of biological role, transfers and isomerizes the ribose moiety from AdoMet to the 7-aminomethyl group of 7-deazaguanine (preQ1-tRNA) to give epoxyqueuosine (oQ-tRNA). In Chlorobium phaeovibrioides (strain DSM 265 / 1930) (Prosthecochloris vibrioformis (strain DSM 265)), this protein is S-adenosylmethionine:tRNA ribosyltransferase-isomerase.